The primary structure comprises 285 residues: MFKDFFNRTKKKKYLTVQDSKNKDVPAGIMTKCPKCKKIMYTKELAENLNVCFNCDHHIALTAYKRIEAISDEGSFTEFDKGMTSANPLDFPSYLEKIEKDQQKTGLKEAVVTGTAQLDGMKFGVAVMDSRFRMGSMGSVIGEKICRIIDYCTENRLPFILFSASGGARMQEGIISLMQMGKTSVSLKRHSDAGLLYISYLTHPTTGGVSASFASVGDINLSEPKALIGFAGRRVIEQTINEKLPDDFQTAEFLLEHGQLDKVVHRNDMRQTLSEILKIHQEVTK.

One can recognise a CoA carboxyltransferase N-terminal domain in the interval 29–285 (IMTKCPKCKK…ILKIHQEVTK (257 aa)). C33, C36, C52, and C55 together coordinate Zn(2+). The segment at 33–55 (CPKCKKIMYTKELAENLNVCFNC) adopts a C4-type zinc-finger fold.

This sequence belongs to the AccD/PCCB family. In terms of assembly, acetyl-CoA carboxylase is a heterohexamer composed of biotin carboxyl carrier protein (AccB), biotin carboxylase (AccC) and two subunits each of ACCase subunit alpha (AccA) and ACCase subunit beta (AccD). Requires Zn(2+) as cofactor.

Its subcellular location is the cytoplasm. It carries out the reaction N(6)-carboxybiotinyl-L-lysyl-[protein] + acetyl-CoA = N(6)-biotinyl-L-lysyl-[protein] + malonyl-CoA. It participates in lipid metabolism; malonyl-CoA biosynthesis; malonyl-CoA from acetyl-CoA: step 1/1. Component of the acetyl coenzyme A carboxylase (ACC) complex. Biotin carboxylase (BC) catalyzes the carboxylation of biotin on its carrier protein (BCCP) and then the CO(2) group is transferred by the transcarboxylase to acetyl-CoA to form malonyl-CoA. The protein is Acetyl-coenzyme A carboxylase carboxyl transferase subunit beta of Staphylococcus aureus (strain Newman).